Consider the following 438-residue polypeptide: POU domain, class 3, transcription factor 3-A (438 aa).

3 disordered regions span residues 22 to 43 (VHSE…SVSG), 102 to 172 (SPWS…QSQQ), and 186 to 248 (GMLN…PTSD). Polar residues-rich tracts occupy residues 103–123 (PWSS…VKSS) and 146–159 (QSHQ…TASH). Low complexity predominate over residues 160 to 172 (ISTITGGQQQSQQ). Over residues 210 to 230 (HHHHHHHQQQHPHHHHHHQHH) the composition is skewed to basic residues. The 75-residue stretch at 242-316 (EDTPTSDDLE…LLNKWLEEAD (75 aa)) folds into the POU-specific domain. Residues 334 to 393 (KRKKRTSIEVSVKGALESHFLKCPKPSAQEITSLADNLQLEKEVVRVWFCNRRQKEKRMT) constitute a DNA-binding region (homeobox).

It belongs to the POU transcription factor family. Class-3 subfamily. Predominantly expressed in the embryonic and adult central nervous system. In adults, isoform 2 is expressed in the brain, ovary, basal cells of the skin and muscle satellite cells.

It is found in the nucleus. In terms of biological role, transcription factor that may play important roles in patterning the embryonic brain. This is POU domain, class 3, transcription factor 3-A (pou3f3a) from Danio rerio (Zebrafish).